We begin with the raw amino-acid sequence, 120 residues long: Ribosome-binding factor A (120 aa).

It belongs to the RbfA family. Monomer. Binds 30S ribosomal subunits, but not 50S ribosomal subunits or 70S ribosomes.

It is found in the cytoplasm. Functionally, one of several proteins that assist in the late maturation steps of the functional core of the 30S ribosomal subunit. Associates with free 30S ribosomal subunits (but not with 30S subunits that are part of 70S ribosomes or polysomes). Required for efficient processing of 16S rRNA. May interact with the 5'-terminal helix region of 16S rRNA. The polypeptide is Ribosome-binding factor A (Fusobacterium nucleatum subsp. nucleatum (strain ATCC 25586 / DSM 15643 / BCRC 10681 / CIP 101130 / JCM 8532 / KCTC 2640 / LMG 13131 / VPI 4355)).